The primary structure comprises 269 residues: Tryptophan synthase alpha chain (269 aa).

Catalysis depends on proton acceptor residues E49 and D60.

This sequence belongs to the TrpA family. In terms of assembly, tetramer of two alpha and two beta chains.

It catalyses the reaction (1S,2R)-1-C-(indol-3-yl)glycerol 3-phosphate + L-serine = D-glyceraldehyde 3-phosphate + L-tryptophan + H2O. It participates in amino-acid biosynthesis; L-tryptophan biosynthesis; L-tryptophan from chorismate: step 5/5. The alpha subunit is responsible for the aldol cleavage of indoleglycerol phosphate to indole and glyceraldehyde 3-phosphate. This Actinobacillus pleuropneumoniae serotype 5b (strain L20) protein is Tryptophan synthase alpha chain.